We begin with the raw amino-acid sequence, 105 residues long: DNA-directed RNA polymerases I and III subunit RPAC2 (105 aa).

It belongs to the archaeal Rpo11/eukaryotic RPB11/RPC19 RNA polymerase subunit family. In terms of assembly, component of the RNA polymerase I (Pol I) and RNA polymerase III (Pol III) complexes consisting of at least 13 and 17 subunits, respectively.

The protein resides in the nucleus. DNA-dependent RNA polymerase catalyzes the transcription of DNA into RNA using the four ribonucleoside triphosphates as substrates. Common core component of RNA polymerases I and III which synthesize ribosomal RNA precursors and small RNAs, such as 5S rRNA and tRNAs, respectively. The polypeptide is DNA-directed RNA polymerases I and III subunit RPAC2 (Drosophila melanogaster (Fruit fly)).